The following is a 690-amino-acid chain: Potassium-transporting ATPase ATP-binding subunit (690 aa).

Helical transmembrane passes span 49–69, 72–92, 229–249, and 253–273; these read SPVM…CFVP, AVPT…VLFA, VALD…VVTL, and ALFA…VTLI. Asp-317 functions as the 4-aspartylphosphate intermediate in the catalytic mechanism. Residues Asp-354, Glu-358, 385–392, and Lys-403 contribute to the ATP site; that span reads FSAETRLS. Mg(2+)-binding residues include Asp-526 and Asp-530. Helical transmembrane passes span 596 to 616, 624 to 644, and 662 to 682; these read FAIL…LNVM, AILS…PLAL, and LLIY…AIDL.

The protein belongs to the cation transport ATPase (P-type) (TC 3.A.3) family. Type IA subfamily. The system is composed of three essential subunits: KdpA, KdpB and KdpC.

It is found in the cell inner membrane. It catalyses the reaction K(+)(out) + ATP + H2O = K(+)(in) + ADP + phosphate + H(+). Its function is as follows. Part of the high-affinity ATP-driven potassium transport (or Kdp) system, which catalyzes the hydrolysis of ATP coupled with the electrogenic transport of potassium into the cytoplasm. This subunit is responsible for energy coupling to the transport system and for the release of the potassium ions to the cytoplasm. The protein is Potassium-transporting ATPase ATP-binding subunit of Pseudomonas aeruginosa (strain ATCC 15692 / DSM 22644 / CIP 104116 / JCM 14847 / LMG 12228 / 1C / PRS 101 / PAO1).